The primary structure comprises 278 residues: MDVRQSIHGAHAKTLDTQGLRNEFLVEKVFVADEYTMVYSHIDRIIVGGIMPITKTVSVGGEVGKQLGVSYFLERRELGVINIGGAGTITVDGQCYEIGHRDALYVGKGAKEVVFASIDTATPAKFYYNCAPAHTTYPTKKVTPDEVSPVTLGDNLTSNRRTINKYFVPDVLETCQLSMGLTELAPGNLWNTMPCHTHERRMEVYFYFNMDDDACVFHMMGQPQETRHIVMHNEQAVISPSWSIHSGVGTKAYTFIWGMVGENQVFNDMDHVGVKDLR.

Positions 196, 198, 203, and 245 each coordinate Zn(2+).

The protein belongs to the KduI family. Zn(2+) is required as a cofactor.

The catalysed reaction is 5-dehydro-4-deoxy-D-glucuronate = 3-deoxy-D-glycero-2,5-hexodiulosonate. The protein operates within glycan metabolism; pectin degradation; 2-dehydro-3-deoxy-D-gluconate from pectin: step 4/5. Functionally, catalyzes the isomerization of 5-dehydro-4-deoxy-D-glucuronate to 3-deoxy-D-glycero-2,5-hexodiulosonate. The protein is 4-deoxy-L-threo-5-hexosulose-uronate ketol-isomerase of Shigella flexneri.